Consider the following 1270-residue polypeptide: Myosin-3 (1270 aa).

The segment at 1–20 (MAVIKKGARRKDVKEPKKRS) is disordered. The region spanning 36-715 (VGVSDLTLLS…SLFALEDMRD (680 aa)) is the Myosin motor domain. 129–136 (GESGAGKT) is a binding site for ATP. The residue at position 357 (serine 357) is a Phosphoserine. Residues 404–486 (SIGILDIYGF…PGILAAMNDS (83 aa)) are actin-binding. IQ domains follow at residues 719–739 (YNMA…RIDA) and 740–765 (AIKI…YGTK). The region spanning 771-961 (KERRSMSLLG…TIYVRRGHPA (191 aa)) is the TH1 domain. 3 disordered regions span residues 951-1015 (STIY…QKPV), 1029-1136 (YNPK…GSSS), and 1215-1270 (VQFG…DDDW). Over residues 980–1000 (IKSKKSKHKSTHKHTHSHRSH) the composition is skewed to basic residues. The span at 1066-1078 (KKASSSHKSSSAK) shows a compositional bias: low complexity. Over residues 1089–1098 (GVEKNKEPLK) the composition is skewed to basic and acidic residues. Pro residues predominate over residues 1107 to 1116 (PIPPPPPPMG). Residues 1118–1180 (PKDPKFEAAY…PTAYMTPYKD (63 aa)) enclose the SH3 domain. Positions 1215–1234 (VQFGSATVGPTSDNQSNPVG) are enriched in polar residues. Over residues 1256-1270 (ADDDDNDDGDDDDDW) the composition is skewed to acidic residues.

It belongs to the TRAFAC class myosin-kinesin ATPase superfamily. Myosin family. Interacts (via myosin motor domain) with SHE4; this interaction is important for proper localization and may regulate the interaction of the motor domain with actin. Interacts (via SH3 domain) with VRP1; this interaction is required for localization to sites of polarized growth and may regulate the interaction of the tail domain with actin. Interacts (via SH3 domain) with PAN1; this interaction is important for late stages of endocytopsis. Interacts (via SH3 domain) with BBC1 and LAS17. Interacts (via C-terminal acidic tail) with ARC19 and ARC40; ARC19 and ARC40 are Arp2/3 complex subunits. Post-translationally, phosphorylation of the TEDS site (Ser-357) is required for the polarization of the actin cytoskeleton and for ligand-induced, but not for constitutive internalization of STE2. Phosphorylation probably activates the myosin-I ATPase. Ser-357 is phosphorylated by CLA4 and STE20 in vitro.

The protein resides in the cytoplasm. It is found in the cytoskeleton. It localises to the actin patch. Its function is as follows. One of two redundant type-I myosins implicated in the organization of the actin cytoskeleton. Required for proper actin cytoskeleton polarization and for the internalization step in endocytosis. At the cell cortex, assembles in patch-like structures together with proteins from the actin-polymerizing machinery and promotes actin assembly. Functions redundantly with LAS17 as actin nucleation-promoting factor (NPF) for the Arp2/3 complex. Motor domain phosphorylation by PAK kinases CLA4 and STE20 promotes CDC42-regulated actin assembly. Functions together with the NPF PAN1 in late stages of endocytosis. Motor domain phosphorylation by PDK1 kinases PKH1 and PKH2, and by SGK kinases YPK1 and YPK2, promotes ligand-induced, but not constitutive endocytosis of the G protein-coupled receptor STE2. The polypeptide is Myosin-3 (MYO3) (Saccharomyces cerevisiae (strain YJM789) (Baker's yeast)).